Reading from the N-terminus, the 181-residue chain is Peptide deformylase 2 (181 aa).

Fe cation contacts are provided by C109 and H151. Residue E152 is part of the active site. H155 is a Fe cation binding site.

Belongs to the polypeptide deformylase family. Fe(2+) serves as cofactor.

The catalysed reaction is N-terminal N-formyl-L-methionyl-[peptide] + H2O = N-terminal L-methionyl-[peptide] + formate. In terms of biological role, removes the formyl group from the N-terminal Met of newly synthesized proteins. Requires at least a dipeptide for an efficient rate of reaction. N-terminal L-methionine is a prerequisite for activity but the enzyme has broad specificity at other positions. The protein is Peptide deformylase 2 of Shewanella oneidensis (strain ATCC 700550 / JCM 31522 / CIP 106686 / LMG 19005 / NCIMB 14063 / MR-1).